A 278-amino-acid chain; its full sequence is MNPYIVLLKPRVIWLLILSSVVGYIYAAQTVDWSKLIALIAVATLAVGGSAAFNHYWERDIDAAMSRTARRPLPAGLIPEFNALVYSLALSAAGITLSFYLLGPLPGLFVALGWFFYAVVYTIWLKRKTWLNILGGGFAGNATFLGGYALGKGTVDLPAVLISFAIYLWIPSHIWALAYKYRHDYRKAGVPMLPAIIDEKKSVVIISILNIASAVYILWLYLAFGQSLLGLALVFAGVAGTVATSILALKEKSDRAMWKMYKASSPILTLFLLALVFS.

Helical transmembrane passes span 12-32 (VIWL…QTVD), 33-53 (WSKL…SAAF), 83-103 (ALVY…YLLG), 105-125 (LPGL…TIWL), 130-150 (WLNI…GYAL), 157-177 (LPAV…IWAL), 204-224 (VIIS…YLAF), 228-248 (LLGL…SILA), and 257-277 (MWKM…ALVF).

It belongs to the UbiA prenyltransferase family. Protoheme IX farnesyltransferase subfamily.

The protein localises to the cell membrane. The enzyme catalyses heme b + (2E,6E)-farnesyl diphosphate + H2O = Fe(II)-heme o + diphosphate. Its pathway is porphyrin-containing compound metabolism; heme O biosynthesis; heme O from protoheme: step 1/1. In terms of biological role, converts heme B (protoheme IX) to heme O by substitution of the vinyl group on carbon 2 of heme B porphyrin ring with a hydroxyethyl farnesyl side group. The polypeptide is Protoheme IX farnesyltransferase (Pyrobaculum islandicum (strain DSM 4184 / JCM 9189 / GEO3)).